The following is a 103-amino-acid chain: Co-chaperonin GroES (103 aa).

This sequence belongs to the GroES chaperonin family. Heptamer of 7 subunits arranged in a ring. Interacts with the chaperonin GroEL.

It is found in the cytoplasm. Its function is as follows. Together with the chaperonin GroEL, plays an essential role in assisting protein folding. The GroEL-GroES system forms a nano-cage that allows encapsulation of the non-native substrate proteins and provides a physical environment optimized to promote and accelerate protein folding. GroES binds to the apical surface of the GroEL ring, thereby capping the opening of the GroEL channel. The sequence is that of Co-chaperonin GroES from Synechococcus elongatus (strain ATCC 33912 / PCC 7942 / FACHB-805) (Anacystis nidulans R2).